A 123-amino-acid polypeptide reads, in one-letter code: Cytochrome c-555 (123 aa).

Positions 1 to 27 (MDHKKTSIRTTALAALVLGAVAAPAFS) are cleaved as a signal peptide. Heme c-binding residues include Cys46, Cys49, His50, and Met86.

In terms of processing, binds 1 heme c group covalently per subunit.

The sequence is that of Cytochrome c-555 from Methylococcus capsulatus (strain ATCC 33009 / NCIMB 11132 / Bath).